The chain runs to 318 residues: MKPLNIIFAGTPDFAARHLQALLNSHHNVIGVYTQPDRPAGRGKKLTASPVKELAVANNIPVYQPGSLRKEPAQQELAALNADIMVVVAYGLILPKVVLDTPRLGCINVHGSILPRWRGAAPIQRALWAGDKETGVTVMQMDVGLDTGDMLLKTTLPIEDSDTSASLYEKLAEQGPVALLQALEGLVNGTLAAEKQDEALANYAEKLSKEEARLDWNKSAQQLWQEVRAFNPWPVSYFEHQGNTIKVWQTQVSETTSTAAPGTIISASKKGIEVATADGVLTLLNMQLPGKKPLNVADILNARGEWFSPNTRLANEAQ.

112 to 115 serves as a coordination point for (6S)-5,6,7,8-tetrahydrofolate; that stretch reads SILP.

The protein belongs to the Fmt family.

It carries out the reaction L-methionyl-tRNA(fMet) + (6R)-10-formyltetrahydrofolate = N-formyl-L-methionyl-tRNA(fMet) + (6S)-5,6,7,8-tetrahydrofolate + H(+). Attaches a formyl group to the free amino group of methionyl-tRNA(fMet). The formyl group appears to play a dual role in the initiator identity of N-formylmethionyl-tRNA by promoting its recognition by IF2 and preventing the misappropriation of this tRNA by the elongation apparatus. The chain is Methionyl-tRNA formyltransferase from Shewanella baltica (strain OS195).